The following is a 142-amino-acid chain: Putative pre-16S rRNA nuclease (142 aa).

This sequence belongs to the YqgF nuclease family.

The protein resides in the cytoplasm. In terms of biological role, could be a nuclease involved in processing of the 5'-end of pre-16S rRNA. The chain is Putative pre-16S rRNA nuclease from Staphylococcus aureus (strain bovine RF122 / ET3-1).